The chain runs to 288 residues: Shikimate dehydrogenase (NADP(+)) (288 aa).

Residues 14-16 and Thr-63 each bind shikimate; that span reads SIS. Lys-67 functions as the Proton acceptor in the catalytic mechanism. Glu-79 lines the NADP(+) pocket. Positions 88 and 103 each coordinate shikimate. NADP(+) contacts are provided by residues 127-131, 151-156, and Met-219; these read GSGGA and NRTYEK. A shikimate-binding site is contributed by Tyr-221. An NADP(+)-binding site is contributed by Gly-242.

It belongs to the shikimate dehydrogenase family. As to quaternary structure, homodimer.

It carries out the reaction shikimate + NADP(+) = 3-dehydroshikimate + NADPH + H(+). Its pathway is metabolic intermediate biosynthesis; chorismate biosynthesis; chorismate from D-erythrose 4-phosphate and phosphoenolpyruvate: step 4/7. Involved in the biosynthesis of the chorismate, which leads to the biosynthesis of aromatic amino acids. Catalyzes the reversible NADPH linked reduction of 3-dehydroshikimate (DHSA) to yield shikimate (SA). This chain is Shikimate dehydrogenase (NADP(+)), found in Caldicellulosiruptor bescii (strain ATCC BAA-1888 / DSM 6725 / KCTC 15123 / Z-1320) (Anaerocellum thermophilum).